The chain runs to 803 residues: Volume-regulated anion channel subunit LRRC8B (803 aa).

The Cytoplasmic portion of the chain corresponds to 1-25; that stretch reads MITLTELKCLADAQSSYHILKPWWD. The chain crosses the membrane as a helical span at residues 26-46; that stretch reads VFWYYITLIMLLVAVLAGALQ. Residues 47–119 lie on the Extracellular side of the membrane; it reads LTQSRVLCCL…YEKQLHWFAK (73 aa). 2 disulfide bridges follow: Cys-55–Cys-304 and Cys-109–Cys-289. Asn-78 carries N-linked (GlcNAc...) asparagine glycosylation. A helical membrane pass occupies residues 120–140; sequence FFPYLVLLHTLIFAACSNFWL. Residues 141–261 are Cytoplasmic-facing; that stretch reads HYPSTSSRLE…DIIYRVYLKQ (121 aa). A phosphoserine mark is found at Ser-186 and Ser-196. A helical transmembrane segment spans residues 262–282; sequence IIVKVILFVLIITYVPYFLTH. The Extracellular segment spans residues 283–307; sequence ITLEIDCSVDVQAFTGYKRYQCVYS. A helical transmembrane segment spans residues 308–328; it reads LAEIFKVLASFYVILVILYGL. Residues 329–803 are Cytoplasmic-facing; that stretch reads TSSYSLWWML…ERLQTCLDKC (475 aa). LRR repeat units follow at residues 464-486, 488-509, 511-532, 539-559, 562-582, 586-607, 609-630, 634-655, 657-678, 680-701, 703-724, 726-747, and 749-771; these read NLKELRVYHSSLVVDHPALAFLE, NLKILRLKFTEMGKIPRWVFHL, NLKELYLSGCVLPEQLSTMQLE, NLRTLYLKSSLSRIPQVVTDL, SLQKLSLDNEGSKLVVLNNLK, NLKSLELISCDLERIPHSIFSL, NLHELDLRENNLKTVEEIISFQ, NLSCLKLWHNNIAYIPAQIGAL, NLEQLSLDHNNIENLPLQLFLC, KLHYLDLSYNHLTFIPEEIQYL, NLQYFAVTNNNIEMLPDGLFQC, KLQCLLLGKNSLMNLSPHVGEL, and NLTHLELIGNYLETLPPELEGCQ.

It belongs to the LRRC8 family. As to quaternary structure, heterohexamer; oligomerizes with other LRRC8 proteins (LRRC8A, LRRC8C, LRRC8D and/or LRRC8E) to form a heterohexamer. In vivo, the subunit composition may depend primarily on expression levels, and heterooligomeric channels containing various proportions of the different LRRC8 proteins may coexist.

Its subcellular location is the cell membrane. It localises to the endoplasmic reticulum membrane. It catalyses the reaction chloride(in) = chloride(out). The enzyme catalyses iodide(out) = iodide(in). It carries out the reaction taurine(out) = taurine(in). Non-essential component of the volume-regulated anion channel (VRAC, also named VSOAC channel), an anion channel required to maintain a constant cell volume in response to extracellular or intracellular osmotic changes. The VRAC channel conducts iodide better than chloride and can also conduct organic osmolytes like taurine. Channel activity requires LRRC8A plus at least one other family member (LRRC8B, LRRC8C, LRRC8D or LRRC8E); channel characteristics depend on the precise subunit composition. The sequence is that of Volume-regulated anion channel subunit LRRC8B from Homo sapiens (Human).